The chain runs to 154 residues: Pro-corazonin (154 aa).

The N-terminal stretch at 1–19 is a signal peptide; it reads MLRLLLLPLFLFTLSMCMG. A Pyrrolidone carboxylic acid modification is found at glutamine 20. Asparagine 30 bears the Asparagine amide mark. Positions 70 to 154 are excised as a propeptide; sequence LERCLSQLQR…SAEPNVFGKH (85 aa).

The protein belongs to the corazonin family. Expression is restricted to 24 neurons in the larval CNS (8 in the brain and 16 in the ventral nerve cord) and 12-16 neurons in the pars lateralis of the adult brain.

The protein resides in the secreted. Cardioactive peptide. Corazonin is probably involved in the physiological regulation of the heart beat. Clock (Clk) and cycle (cyc) proteins negatively regulate Crz transcription in a cell-specific manner. This is Pro-corazonin (Crz) from Drosophila simulans (Fruit fly).